The primary structure comprises 186 residues: ADP-ribosylation factor-like protein 8A (186 aa).

The note=Mediates targeting to membranes intramembrane region spans 1–19 (MLALFNKLLDWFRALFWKE). GTP-binding positions include 29–35 (QYSGKTT), 71–75 (DIGGQ), and 130–133 (NKRD).

It belongs to the small GTPase superfamily. Arf family.

It is found in the late endosome membrane. The protein resides in the lysosome membrane. The protein localises to the cytoplasm. It localises to the cytoskeleton. Its subcellular location is the spindle. It is found in the cell projection. The protein resides in the axon. The protein localises to the synapse. In terms of biological role, plays a role in lysosome motility. In neurons, mediates the anterograde axonal long-range transport of presynaptic lysosome-related vesicles required for presynaptic biogenesis and synaptic function. May play a role in chromosome segregation. This is ADP-ribosylation factor-like protein 8A (ARL8A) from Gallus gallus (Chicken).